The sequence spans 526 residues: Transcription factor kayak (526 aa).

2 disordered regions span residues 71–165 (PPLA…GTGG) and 178–221 (RNTN…NKQA). Composition is skewed to low complexity over residues 78 to 87 (NNNNNNNNNG) and 133 to 153 (ISDT…HMMG). The segment covering 154–165 (NSGGGNGGGTGG) has biased composition (gly residues). The segment covering 178–187 (RNTNTSNSAT) has biased composition (polar residues). In terms of domain architecture, bZIP spans 208–271 (EEKRRIRRER…NQLEYFLQAH (64 aa)). The interval 210 to 229 (KRRIRRERNKQAAARCRKRR) is basic motif. Residues 236–264 (LTEEVELLEKRGENLKKEMELLNETKNQL) form a leucine-zipper region. Residues 301-322 (GSCGSGSSHHNNNSNSNDSSSG) show a composition bias toward low complexity. Disordered stretches follow at residues 301-345 (GSCG…DLKP) and 504-526 (TSQN…LVSL). The span at 330–340 (TLNSTGRSNSP) shows a compositional bias: polar residues. Serine 339 bears the Phosphoserine mark.

Belongs to the bZIP family. Fos subfamily. Homodimer. Heterodimer with Jra. The kay-Jra heterodimer binds more stably to the AP-1 site than either of the two proteins alone.

The protein resides in the nucleus. In terms of biological role, developmentally regulated transcription factor AP-1 binds and recognizes the enhancer DNA sequence: 5'-TGA[CG]TCA-3'. May play a role in the function or determination of a particular subset of cells in the developing embryo. It is able to carry out its function either independently of or in conjunction with Jra. The polypeptide is Transcription factor kayak (Drosophila persimilis (Fruit fly)).